The chain runs to 345 residues: UDP-3-O-acylglucosamine N-acyltransferase (345 aa).

His248 acts as the Proton acceptor in catalysis.

It belongs to the transferase hexapeptide repeat family. LpxD subfamily. Homotrimer.

It catalyses the reaction a UDP-3-O-[(3R)-3-hydroxyacyl]-alpha-D-glucosamine + a (3R)-hydroxyacyl-[ACP] = a UDP-2-N,3-O-bis[(3R)-3-hydroxyacyl]-alpha-D-glucosamine + holo-[ACP] + H(+). The protein operates within bacterial outer membrane biogenesis; LPS lipid A biosynthesis. Its function is as follows. Catalyzes the N-acylation of UDP-3-O-acylglucosamine using 3-hydroxyacyl-ACP as the acyl donor. Is involved in the biosynthesis of lipid A, a phosphorylated glycolipid that anchors the lipopolysaccharide to the outer membrane of the cell. This Trichodesmium erythraeum (strain IMS101) protein is UDP-3-O-acylglucosamine N-acyltransferase.